Consider the following 774-residue polypeptide: RNA exonuclease 5 (774 aa).

The span at 1–19 (MEPEREGTERHPRKVRESR) shows a compositional bias: basic and acidic residues. Residues 1–22 (MEPEREGTERHPRKVRESRQAP) form a disordered region. In terms of domain architecture, Exonuclease spans 228 to 376 (LFGLDCEMCL…EDARTILELA (149 aa)). 2 RRM domains span residues 505-579 (STVY…RPVT) and 600-679 (GSIY…RHLH).

The chain is RNA exonuclease 5 from Homo sapiens (Human).